The chain runs to 156 residues: Small ribosomal subunit protein uS7 (156 aa).

Belongs to the universal ribosomal protein uS7 family. In terms of assembly, part of the 30S ribosomal subunit. Contacts proteins S9 and S11.

Its function is as follows. One of the primary rRNA binding proteins, it binds directly to 16S rRNA where it nucleates assembly of the head domain of the 30S subunit. Is located at the subunit interface close to the decoding center, probably blocks exit of the E-site tRNA. This chain is Small ribosomal subunit protein uS7, found in Colwellia psychrerythraea (strain 34H / ATCC BAA-681) (Vibrio psychroerythus).